A 282-amino-acid polypeptide reads, in one-letter code: Pyrroline-5-carboxylate reductase (282 aa).

Belongs to the pyrroline-5-carboxylate reductase family.

It carries out the reaction L-proline + NADP(+) = (S)-1-pyrroline-5-carboxylate + NADPH + 2 H(+). The enzyme catalyses L-proline + NAD(+) = (S)-1-pyrroline-5-carboxylate + NADH + 2 H(+). It functions in the pathway amino-acid biosynthesis; L-proline biosynthesis; L-proline from L-glutamate 5-semialdehyde: step 1/1. In Schizosaccharomyces pombe (strain 972 / ATCC 24843) (Fission yeast), this protein is Pyrroline-5-carboxylate reductase (pro3).